Here is a 205-residue protein sequence, read N- to C-terminus: MMLITTHSLPLLLLLLQLWQPLQFQEAYYEDFYFPAYSDKEDFEDFMVEFQSTGPTRPPTKEKVKRRILVNPGMPLGDSGYCNYQIMRKNVYYKYSCVTEHYFLLMQYDELQKTCYNRFVPCKNGIRKCNMSKKLVEGVYCNLTKASNIPLCQYNSFYRRGYVLITCTWQNEMQKLIPYPINDLVEPPEHTKSFLNEDGVFVVPP.

Positions 1 to 24 (MMLITTHSLPLLLLLLQLWQPLQF) are cleaved as a signal peptide. Disulfide bonds link cysteine 97–cysteine 152, cysteine 115–cysteine 167, and cysteine 122–cysteine 129. Asparagine 130 and asparagine 142 each carry an N-linked (GlcNAc...) asparagine glycan.

It belongs to the pancreatic ribonuclease family.

It is found in the secreted. Does not exhibit any ribonuclease activity. The polypeptide is Inactive ribonuclease-like protein 9 (RNASE9) (Cebus albifrons (White-fronted capuchin)).